Reading from the N-terminus, the 178-residue chain is ATP synthase subunit b, chloroplastic (178 aa).

A helical transmembrane segment spans residues 26–46 (TNLINIIILLIILFYFLKGLL).

The protein belongs to the ATPase B chain family. F-type ATPases have 2 components, F(1) - the catalytic core - and F(0) - the membrane proton channel. F(1) has five subunits: alpha(3), beta(3), gamma(1), delta(1), epsilon(1). F(0) has four main subunits: a(1), b(1), b'(1) and c(10-14). The alpha and beta chains form an alternating ring which encloses part of the gamma chain. F(1) is attached to F(0) by a central stalk formed by the gamma and epsilon chains, while a peripheral stalk is formed by the delta, b and b' chains.

The protein localises to the plastid. It is found in the chloroplast thylakoid membrane. F(1)F(0) ATP synthase produces ATP from ADP in the presence of a proton or sodium gradient. F-type ATPases consist of two structural domains, F(1) containing the extramembraneous catalytic core and F(0) containing the membrane proton channel, linked together by a central stalk and a peripheral stalk. During catalysis, ATP synthesis in the catalytic domain of F(1) is coupled via a rotary mechanism of the central stalk subunits to proton translocation. Functionally, component of the F(0) channel, it forms part of the peripheral stalk, linking F(1) to F(0). This Vaucheria litorea (Yellow-green alga) protein is ATP synthase subunit b, chloroplastic.